An 816-amino-acid chain; its full sequence is Probable E3 ubiquitin-protein ligase hulA (816 aa).

Positions 1-112 (MGSNLPAQPN…QMGGDEMLTR (112 aa)) constitute a C2 domain. Disordered regions lie at residues 134-238 (NLST…WERR) and 253-353 (RTTT…YFVD). Polar residues-rich tracts occupy residues 151 to 168 (MQPSTSSGLVPQVSASTP), 177 to 202 (ADPTASNPSLHPQRVPSTTRPSSTIV), 217 to 226 (SRTNLSSFED), and 253 to 270 (RTTTWTRPSNNYNEQTSR). Residues 229-262 (GRLPAGWERREDNLGRTYYVDHNTRTTTWTRPSN) form the WW 1 domain. Residues 279–294 (LERRAHQSRMLPEDRT) are compositionally biased toward basic and acidic residues. The segment covering 295–309 (GASSPNLQENQQQAQ) has biased composition (polar residues). Positions 310-333 (TPPAGGSASAVSMMATGATTAGTG) are enriched in low complexity. WW domains lie at 333–366 (GELPPGWEQRTTPEGRPYFVDHNTRTTTWVDPRR) and 393–426 (GPLPSGWEMRLTNTARVYFVDHNTKTTTWDDPRL). Positions 482-816 (SASDLKKRLM…VEETLGFGQE (335 aa)) constitute an HECT domain. Cys-784 serves as the catalytic Glycyl thioester intermediate.

The protein belongs to the RSP5/NEDD4 family. Interacts with creD.

It is found in the cytoplasm. The enzyme catalyses S-ubiquitinyl-[E2 ubiquitin-conjugating enzyme]-L-cysteine + [acceptor protein]-L-lysine = [E2 ubiquitin-conjugating enzyme]-L-cysteine + N(6)-ubiquitinyl-[acceptor protein]-L-lysine.. It functions in the pathway protein modification; protein ubiquitination. E3 ubiquitin-protein ligase which accepts ubiquitin from an E2 ubiquitin-conjugating enzyme in the form of a thioester and then directly transfers the ubiquitin to targeted substrates. Probably involved in the regulatory network controlling carbon source utilization. The protein is Probable E3 ubiquitin-protein ligase hulA (hulA) of Aspergillus oryzae (strain ATCC 42149 / RIB 40) (Yellow koji mold).